The primary structure comprises 1071 residues: ATP-dependent helicase/deoxyribonuclease subunit B (1071 aa).

Belongs to the helicase family. AddB/RexB type 2 subfamily. As to quaternary structure, heterodimer of AddA and RexB. Mg(2+) is required as a cofactor.

Its function is as follows. The heterodimer acts as both an ATP-dependent DNA helicase and an ATP-dependent, dual-direction single-stranded exonuclease. Recognizes the chi site generating a DNA molecule suitable for the initiation of homologous recombination. This subunit has 5' -&gt; 3' nuclease activity but not helicase activity. This Streptococcus pyogenes serotype M4 (strain MGAS10750) protein is ATP-dependent helicase/deoxyribonuclease subunit B.